Consider the following 209-residue polypeptide: Protease (209 aa).

Active-site residues include His-55, Asp-72, and Cys-123.

The protein belongs to the peptidase C5 family. As to quaternary structure, interacts with protease cofactor pVI-C; this interaction is necessary for protease activation.

It localises to the virion. The protein resides in the host nucleus. It catalyses the reaction Cleaves proteins of the adenovirus and its host cell at two consensus sites: -Yaa-Xaa-Gly-Gly-|-Xaa- and -Yaa-Xaa-Gly-Xaa-|-Gly- (in which Yaa is Met, Ile or Leu, and Xaa is any amino acid).. Requires DNA and protease cofactor for maximal activation. Inside nascent virions, becomes partially activated by binding to the viral DNA, allowing it to cleave the cofactor that binds to the protease and fully activates it. Actin, like the viral protease cofactor, seems to act as a cofactor in the cleavage of cytokeratin 18 and of actin itself. Its function is as follows. Cleaves viral precursor proteins (pTP, pIIIa, pVI, pVII, pVIII, and pX) inside newly assembled particles giving rise to mature virions. Protease complexed to its cofactor slides along the viral DNA to specifically locate and cleave the viral precursors. Mature virions have a weakened organization compared to the unmature virions, thereby facilitating subsequent uncoating. Without maturation, the particle lacks infectivity and is unable to uncoat. Late in adenovirus infection, in the cytoplasm, may participate in the cytoskeleton destruction. Cleaves host cell cytoskeletal keratins K7 and K18. The protein is Protease of Human adenovirus D serotype 9 (HAdV-9).